The chain runs to 255 residues: MELIPAIDLMNGKCVRLFKGDFNKRKDFTKEPHEQAKYWESEGAKYIHIVDLDAAKTGSPTNDKSIKDIAKTVNIPIQIGGGIRSQERIEQLFSYGIEKVIMGTSAIENKELVKDLSNKFPGRIIVGIDAKDGKVSTRGWLEQSNILATDLVREFSSFKIASFIVTDINTDGTLEGTNEEFIKRILEITDIPVIASGGVGSISDLLSLVKLENSGLFGVIVGKALYENKFKISEAINVLSSERLTDFDLNNNYYA.

The active-site Proton acceptor is Asp-8. The active-site Proton donor is Asp-129.

This sequence belongs to the HisA/HisF family.

It localises to the cytoplasm. The catalysed reaction is 1-(5-phospho-beta-D-ribosyl)-5-[(5-phospho-beta-D-ribosylamino)methylideneamino]imidazole-4-carboxamide = 5-[(5-phospho-1-deoxy-D-ribulos-1-ylimino)methylamino]-1-(5-phospho-beta-D-ribosyl)imidazole-4-carboxamide. It participates in amino-acid biosynthesis; L-histidine biosynthesis; L-histidine from 5-phospho-alpha-D-ribose 1-diphosphate: step 4/9. The sequence is that of 1-(5-phosphoribosyl)-5-[(5-phosphoribosylamino)methylideneamino] imidazole-4-carboxamide isomerase from Prochlorococcus marinus (strain MIT 9312).